Consider the following 562-residue polypeptide: Eukaryotic translation initiation factor 3 subunit L (562 aa).

The region spanning 329–535 (DAIRVFANIL…IHIADTKVAR (207 aa)) is the PCI domain.

This sequence belongs to the eIF-3 subunit L family. Component of the eukaryotic translation initiation factor 3 (eIF-3) complex, which is composed of 13 subunits: eif3a, eif3b, eif3c, eif3d, eif3e, eif3f, eif3g, eif3h, eif3i, eif3j, eif3k, eif3l and eif3m.

The protein localises to the cytoplasm. Functionally, component of the eukaryotic translation initiation factor 3 (eIF-3) complex, which is involved in protein synthesis of a specialized repertoire of mRNAs and, together with other initiation factors, stimulates binding of mRNA and methionyl-tRNAi to the 40S ribosome. The eIF-3 complex specifically targets and initiates translation of a subset of mRNAs involved in cell proliferation. The protein is Eukaryotic translation initiation factor 3 subunit L (eif3l) of Xenopus tropicalis (Western clawed frog).